The chain runs to 336 residues: MSQDFWFLLLPGFSVMGFVSAVEPLRVANRFHADLYRWHVLSADGGPVLASNGMSVNSDGALEPLKKGDLLFVVAGFEPLRAVTPALVQWLRKLDRNGVTLGGIDTGSVVLAEAGLLDGRRATLHWEAIDAFQESYPQLSVTQELFEIDGPRITSAGGTASIDLMLDLIAQAHGPQLAVQVSEQFVLGRIRPRQDHQRLQVATRYGVSNRKLVQVIGEMERHTEPPLTTLELAERIQVTRRQLERLFRVHLDDTPSNFYLGLRLDKARQLLRQTDLSVLQVSLACGFESPSYFSRSYRARFAASPSQDRAVLPLKAPAATPPGAPAGHRTPRAERG.

An HTH araC/xylS-type domain is found at 213–311; that stretch reads VQVIGEMERH…AASPSQDRAV (99 aa). 2 DNA-binding regions (H-T-H motif) span residues 230–251 and 278–301; these read LELA…RVHL and VLQV…RARF. The tract at residues 305–336 is disordered; that stretch reads PSQDRAVLPLKAPAATPPGAPAGHRTPRAERG.

Its function is as follows. Induces the transcription of the PA5384-PA5388 operon in response to carnitine. This operon is involved in the degradation of L-carnitine, and allows P.aeruginosa to grow on L-carnitine as the sole source of carbon and nitrogen. The polypeptide is HTH-type transcriptional regulator CdhR (cdhR) (Pseudomonas aeruginosa (strain ATCC 15692 / DSM 22644 / CIP 104116 / JCM 14847 / LMG 12228 / 1C / PRS 101 / PAO1)).